Here is a 211-residue protein sequence, read N- to C-terminus: Methylamine utilization protein MauD (211 aa).

Residues 5–25 form a helical membrane-spanning segment; it reads ILIASNVLLWGAFLALAALML. A Thioredoxin domain is found at 50 to 187; sequence PDVGERSPIF…LFETIREGHS (138 aa).

Its subcellular location is the membrane. Its pathway is one-carbon metabolism; methylamine degradation. Functionally, may be specifically involved in the processing, transport, and/or maturation of the MADH beta-subunit. This chain is Methylamine utilization protein MauD (mauD), found in Methylophilus methylotrophus (Bacterium W3A1).